A 492-amino-acid polypeptide reads, in one-letter code: Aspartyl/glutamyl-tRNA(Asn/Gln) amidotransferase subunit B (492 aa).

Belongs to the GatB/GatE family. GatB subfamily. As to quaternary structure, heterotrimer of A, B and C subunits.

It carries out the reaction L-glutamyl-tRNA(Gln) + L-glutamine + ATP + H2O = L-glutaminyl-tRNA(Gln) + L-glutamate + ADP + phosphate + H(+). The catalysed reaction is L-aspartyl-tRNA(Asn) + L-glutamine + ATP + H2O = L-asparaginyl-tRNA(Asn) + L-glutamate + ADP + phosphate + 2 H(+). Functionally, allows the formation of correctly charged Asn-tRNA(Asn) or Gln-tRNA(Gln) through the transamidation of misacylated Asp-tRNA(Asn) or Glu-tRNA(Gln) in organisms which lack either or both of asparaginyl-tRNA or glutaminyl-tRNA synthetases. The reaction takes place in the presence of glutamine and ATP through an activated phospho-Asp-tRNA(Asn) or phospho-Glu-tRNA(Gln). This is Aspartyl/glutamyl-tRNA(Asn/Gln) amidotransferase subunit B from Dehalococcoides mccartyi (strain ATCC BAA-2266 / KCTC 15142 / 195) (Dehalococcoides ethenogenes (strain 195)).